A 154-amino-acid polypeptide reads, in one-letter code: Flagellar assembly factor FliW (154 aa).

The protein belongs to the FliW family. Interacts with translational regulator CsrA and flagellin(s).

The protein localises to the cytoplasm. Functionally, acts as an anti-CsrA protein, binds CsrA and prevents it from repressing translation of its target genes, one of which is flagellin. Binds to flagellin and participates in the assembly of the flagellum. The chain is Flagellar assembly factor FliW from Carboxydothermus hydrogenoformans (strain ATCC BAA-161 / DSM 6008 / Z-2901).